The sequence spans 254 residues: Tyrosine-protein phosphatase YwqE (254 aa).

This sequence belongs to the metallo-dependent hydrolases superfamily. CpsB/CapC family. Mn(2+) is required as a cofactor.

The enzyme catalyses O-phospho-L-tyrosyl-[protein] + H2O = L-tyrosyl-[protein] + phosphate. With respect to regulation, inhibited by vanadate and sodium pyrophosphate. Not inhibited by sodium fluoride. Dephosphorylates the phosphotyrosine-containing proteins YwqD, YwqF and Ssb. The polypeptide is Tyrosine-protein phosphatase YwqE (ywqE) (Bacillus subtilis (strain 168)).